We begin with the raw amino-acid sequence, 249 residues long: Acetylglutamate kinase (249 aa).

Residues 38–39 (GG), R60, and N147 contribute to the substrate site.

It belongs to the acetylglutamate kinase family. ArgB subfamily.

Its subcellular location is the cytoplasm. The catalysed reaction is N-acetyl-L-glutamate + ATP = N-acetyl-L-glutamyl 5-phosphate + ADP. Its pathway is amino-acid biosynthesis; L-arginine biosynthesis; N(2)-acetyl-L-ornithine from L-glutamate: step 2/4. Catalyzes the ATP-dependent phosphorylation of N-acetyl-L-glutamate. This is Acetylglutamate kinase from Deinococcus radiodurans (strain ATCC 13939 / DSM 20539 / JCM 16871 / CCUG 27074 / LMG 4051 / NBRC 15346 / NCIMB 9279 / VKM B-1422 / R1).